The chain runs to 547 residues: MKNINPTQTAAWQALQQHFEQMKEVHIADLFANDANRFAAFSATFDDRMLVDYSKNRITSETLEKLQALAKETDLQSAIKSMFSGEKINRTEDRAVLHVALRNRSNTPIVVDGKDVMPEVNAVLAKMKAFSERIISGEWKGFTGKAITDVVNIGIGGSDLGPFMVTEALRPYKNHLKMHFVSNVDGTHIAETLKMLSPETTLFLVASKTFTTQETMTNAHSAREWFLTSGQQQDVAKHFAALSTNGEAVSEFGIDTDNMFEFWDWVGGRYSLWSAIGLSIALSIGYENFEKLLSGAHAMDRHFADTPEEKNLPILLALIGIWYNNFFGAETEAILPYDQYMHRFAAYFQQGNMESNGKYVDRAGNPVSYQTGPIIWGEPGTNGQHAFYQLIHQGTKLVPCDFIAPAVSHNQLGDHHSKLLSNFFAQTEALAFGKSREVVEKEFADAGKDAQSVEHIVPFKVFEGNRPTNSILLRDITPYSLGALIAMYEHKIFTQGAILNIFTFDQWGVELGKQLASRILPELADAAEVSSHDGSTNGLINLYKSWR.

Residue glutamate 354 is the Proton donor of the active site. Catalysis depends on residues histidine 385 and lysine 513.

This sequence belongs to the GPI family.

The protein localises to the cytoplasm. The enzyme catalyses alpha-D-glucose 6-phosphate = beta-D-fructose 6-phosphate. The protein operates within carbohydrate biosynthesis; gluconeogenesis. It participates in carbohydrate degradation; glycolysis; D-glyceraldehyde 3-phosphate and glycerone phosphate from D-glucose: step 2/4. Functionally, catalyzes the reversible isomerization of glucose-6-phosphate to fructose-6-phosphate. The chain is Glucose-6-phosphate isomerase from Erwinia tasmaniensis (strain DSM 17950 / CFBP 7177 / CIP 109463 / NCPPB 4357 / Et1/99).